The chain runs to 339 residues: GTP 3',8-cyclase (339 aa).

The region spanning Arg-13–Ala-249 is the Radical SAM core domain. Arg-22 lines the GTP pocket. [4Fe-4S] cluster contacts are provided by Cys-29 and Cys-33. Tyr-35 lines the S-adenosyl-L-methionine pocket. Cys-36 is a binding site for [4Fe-4S] cluster. Arg-75 provides a ligand contact to GTP. Residue Gly-79 participates in S-adenosyl-L-methionine binding. Residue Thr-106 participates in GTP binding. Ser-130 contributes to the S-adenosyl-L-methionine binding site. Residue Lys-168 participates in GTP binding. Met-202 lines the S-adenosyl-L-methionine pocket. [4Fe-4S] cluster contacts are provided by Cys-266 and Cys-269. Arg-271 to Arg-273 lines the GTP pocket. Residue Cys-283 coordinates [4Fe-4S] cluster.

It belongs to the radical SAM superfamily. MoaA family. Monomer and homodimer. It depends on [4Fe-4S] cluster as a cofactor.

The catalysed reaction is GTP + AH2 + S-adenosyl-L-methionine = (8S)-3',8-cyclo-7,8-dihydroguanosine 5'-triphosphate + 5'-deoxyadenosine + L-methionine + A + H(+). It functions in the pathway cofactor biosynthesis; molybdopterin biosynthesis. Its function is as follows. Catalyzes the cyclization of GTP to (8S)-3',8-cyclo-7,8-dihydroguanosine 5'-triphosphate. This is GTP 3',8-cyclase from Xanthomonas campestris pv. campestris (strain B100).